The primary structure comprises 1684 residues: MASNNYIQIMEKAPKYQTAYACEGKKLTIECEQGELINLIRANYGRFSITICNDHGNVEWSVNCMFPKSLTVLNSRCAHKNSCSVLAATSMFGDPCPGTHKYLEAHYQCVSAAQTSTTTNRPSPPPWVLNNGPPIFGNGSGLIHPTNIGGGSGGASAPPRLPTLPGVVGINGNGGMFNIPPPATHATPPGSTATLPGGRLKGVATSTTTTKHPAGRRDGLPPPPQLHHHHNHHTDETTPTKPSGKVPAASNATAPSNTRILTGVGGGGTDDGTLLTTKSSPNRTPGTAASGPSVSSNGSAVRTINNINLNAAGMAGADDETKLFCGPTHARNLFWNMTRVGDVNVQPCPGGAAGIAKWRCVLMKRMPDSSFDEDDEEMAGTSTTTPMSTSSDCLYNSSSCEPPVTMAHKVNQRLRNFEPTWHPLTPDLTQCRSLWLNNLEMRVNQRDSSLISIANDMSEVTSSKTLYGGDMLVTTKIIQTVSEKMLHDKETFPDQRQREAMIMELLHCVVKTGSNLLDESQLSSWLDLNPEDQMRVATSLLTGLEYNAFLLADTIIRERSVVQKVKNILLSVRVLETKTIQSSVVFPDSDQWPISSDRIELPRAALIENSEGGLVRIVFAAFDRLESILKPSYDHFDLKSSRSYVRNTAILTNDSDASAGDLQQRLRILNSKVISASLGKGRHIQLSQPITLTLKHLKTENVTNPTCVFWNYIDHAWSANGCSLESTNRTHSVCSCNHLTNFAILMDVVDEHQHSLFTMFDGNMRIFIYISIAICVVFIVIALLTLKLFNGVFVKSARTSIYINIYICLLAIELLFLLGIEQTETSIFCGFITVFLHCAILSGTSWFCYEAFHSYSTLTSDELLLEVDQTPKVNCYYLLSYGLSLSVVAISLVINPSTYTQNDYCVLMEANAVFYATFVAPVLIFFMAAIGYTFLSWIIMCRKSRTGLKTKEHTRLATVRFDIRCSFVFFLLLSAVWCSAYFYLRGAKMDEDVTGIYGYNFICFNTLLGLYIFVFHCIQNEKIRREYRKYVRQHAWLPKCLRCSKTSISSGIVAGGGTGLGGTNAGTLCSVSTAKKSKLPLGTNDDAHDEQQQQQHMSATEDAIMGASSDCELNEAQQRRTLKSGLITGTLQPSQSLGGHVVLERGNTLRSTGHASPTSSAGSTHLIFAHKPQQQQPPLGEAYYHQPDYYSWKQTAGGMKAQREYYNNAGAATSSPQQAHEVFYWTQKPNSQHGKKKRGGVGAIPASPSGSLHSRATAASQVLFYPSYKKTKPGQQAHPHYAEALDPPQPPNTAAYYQQQQQLRQQRQQQQQQLSSDEEQAEQHAHLLHLQHQQQQQQQRRAGGQQQLPAPPPHMAQYQQEFMQRQYRNKHSNCDLGDAYYNQGSVGGADGGPVYEEILSNRNSDAQHYEVGDFDVDEVYNNSVGTGVFNNMRAAVAAGGSRYGGSLSGGSVSSRNQQQQQHSLAQPISARRCTADEDDDEDEDDEETTAAEQLHDGVCDEEEEDEESDMEDDSHGLPPQSAERMRRLMALQDEDFKRRFQRQQRKHGAPVDYGTLPPGSAQAVIGGAHPEHNGAVFGVSGGVGEGSMRGALRQQHAKSPSARLAVNELFGHGNTGPPLPPANQTPAQKRQQLQKLSPQSTTSSSSHTSHSNPHSHPPHHQQRHLSAMLDENNTVRCYLEPLAK.

The Extracellular segment spans residues 1 to 765 (MASNNYIQIM…LFTMFDGNMR (765 aa)). The 90-residue stretch at 21-110 (ACEGKKLTIE…KYLEAHYQCV (90 aa)) folds into the SUEL-type lectin domain. N-linked (GlcNAc...) asparagine glycosylation is found at Asn-138, Asn-251, Asn-297, and Asn-336. Residues 181 to 300 (PPATHATPPG…GPSVSSNGSA (120 aa)) are disordered. Polar residues-rich tracts occupy residues 250 to 260 (SNATAPSNTRI) and 278 to 300 (KSSP…NGSA). The segment at 370-391 (SFDEDDEEMAGTSTTTPMSTSS) is disordered. Low complexity predominate over residues 381–391 (TSTTTPMSTSS). Residues Asn-396, Asn-653, Asn-701, and Asn-728 are each glycosylated (N-linked (GlcNAc...) asparagine). The 194-residue stretch at 559–752 (RSVVQKVKNI…AILMDVVDEH (194 aa)) folds into the GAIN-B domain. 2 disulfides stabilise this stretch: Cys-707/Cys-734 and Cys-722/Cys-736. A GPS region spans residues 707–752 (CVFWNYIDHAWSANGCSLESTNRTHSVCSCNHLTNFAILMDVVDEH). Residues 766 to 786 (IFIYISIAICVVFIVIALLTL) form a helical membrane-spanning segment. Residues 787-799 (KLFNGVFVKSART) lie on the Cytoplasmic side of the membrane. A helical membrane pass occupies residues 800 to 820 (SIYINIYICLLAIELLFLLGI). At 821-826 (EQTETS) the chain is on the extracellular side. A helical transmembrane segment spans residues 827 to 847 (IFCGFITVFLHCAILSGTSWF). The Cytoplasmic portion of the chain corresponds to 848-873 (CYEAFHSYSTLTSDELLLEVDQTPKV). Residues 874–894 (NCYYLLSYGLSLSVVAISLVI) form a helical membrane-spanning segment. The Extracellular portion of the chain corresponds to 895–918 (NPSTYTQNDYCVLMEANAVFYATF). A helical membrane pass occupies residues 919–939 (VAPVLIFFMAAIGYTFLSWII). At 940-966 (MCRKSRTGLKTKEHTRLATVRFDIRCS) the chain is on the cytoplasmic side. The helical transmembrane segment at 967-987 (FVFFLLLSAVWCSAYFYLRGA) threads the bilayer. Topologically, residues 988 to 994 (KMDEDVT) are extracellular. The chain crosses the membrane as a helical span at residues 995–1015 (GIYGYNFICFNTLLGLYIFVF). Residues 1016 to 1684 (HCIQNEKIRR…VRCYLEPLAK (669 aa)) lie on the Cytoplasmic side of the membrane. The tract at residues 1080–1100 (PLGTNDDAHDEQQQQQHMSAT) is disordered. Ser-1156, Ser-1247, and Ser-1254 each carry phosphoserine. Disordered stretches follow at residues 1228-1255 (KPNS…LHSR), 1270-1353 (KTKP…APPP), 1441-1520 (SRYG…LPPQ), and 1587-1669 (SMRG…SAML). The span at 1298–1314 (QQQQQLRQQRQQQQQQL) shows a compositional bias: low complexity. Phosphoserine occurs at positions 1315 and 1316. Positions 1328 to 1348 (LHLQHQQQQQQQRRAGGQQQL) are enriched in low complexity. Polar residues predominate over residues 1455–1466 (RNQQQQQHSLAQ). 2 stretches are compositionally biased toward acidic residues: residues 1476–1489 (DEDD…EETT) and 1499–1512 (CDEE…DMED). Residues 1631-1654 (QQLQKLSPQSTTSSSSHTSHSNPH) are compositionally biased toward low complexity.

This sequence belongs to the G-protein coupled receptor 2 family. LN-TM7 subfamily. In terms of assembly, forms a heterodimer, consisting of a large extracellular region non-covalently linked to a seven-transmembrane moiety. Post-translationally, proteolytically cleaved into 2 subunits, an extracellular subunit and a seven-transmembrane subunit.

It localises to the cell membrane. The sequence is that of Latrophilin Cirl from Drosophila persimilis (Fruit fly).